Here is a 371-residue protein sequence, read N- to C-terminus: Anhydro-N-acetylmuramic acid kinase (371 aa).

Gly12–Asp20 is an ATP binding site.

It belongs to the anhydro-N-acetylmuramic acid kinase family.

The catalysed reaction is 1,6-anhydro-N-acetyl-beta-muramate + ATP + H2O = N-acetyl-D-muramate 6-phosphate + ADP + H(+). It functions in the pathway amino-sugar metabolism; 1,6-anhydro-N-acetylmuramate degradation. The protein operates within cell wall biogenesis; peptidoglycan recycling. Catalyzes the specific phosphorylation of 1,6-anhydro-N-acetylmuramic acid (anhMurNAc) with the simultaneous cleavage of the 1,6-anhydro ring, generating MurNAc-6-P. Is required for the utilization of anhMurNAc either imported from the medium or derived from its own cell wall murein, and thus plays a role in cell wall recycling. In Brucella anthropi (strain ATCC 49188 / DSM 6882 / CCUG 24695 / JCM 21032 / LMG 3331 / NBRC 15819 / NCTC 12168 / Alc 37) (Ochrobactrum anthropi), this protein is Anhydro-N-acetylmuramic acid kinase.